The following is a 340-amino-acid chain: Ketol-acid reductoisomerase (NADP(+)) (340 aa).

Residues 1–182 (MRVYYDRDCD…GGGRSGIIET (182 aa)) enclose the KARI N-terminal Rossmann domain. NADP(+) is bound by residues 24 to 27 (YGSQ), R48, S51, S53, and 83 to 86 (DELQ). The active site involves H108. An NADP(+)-binding site is contributed by G134. In terms of domain architecture, KARI C-terminal knotted spans 183–329 (NFRQECETDL…EKLRGMMPWI (147 aa)). Residues D191, E195, E227, and E231 each contribute to the Mg(2+) site. Residue S252 coordinates substrate.

This sequence belongs to the ketol-acid reductoisomerase family. Requires Mg(2+) as cofactor.

It catalyses the reaction (2R)-2,3-dihydroxy-3-methylbutanoate + NADP(+) = (2S)-2-acetolactate + NADPH + H(+). The catalysed reaction is (2R,3R)-2,3-dihydroxy-3-methylpentanoate + NADP(+) = (S)-2-ethyl-2-hydroxy-3-oxobutanoate + NADPH + H(+). It participates in amino-acid biosynthesis; L-isoleucine biosynthesis; L-isoleucine from 2-oxobutanoate: step 2/4. Its pathway is amino-acid biosynthesis; L-valine biosynthesis; L-valine from pyruvate: step 2/4. Involved in the biosynthesis of branched-chain amino acids (BCAA). Catalyzes an alkyl-migration followed by a ketol-acid reduction of (S)-2-acetolactate (S2AL) to yield (R)-2,3-dihydroxy-isovalerate. In the isomerase reaction, S2AL is rearranged via a Mg-dependent methyl migration to produce 3-hydroxy-3-methyl-2-ketobutyrate (HMKB). In the reductase reaction, this 2-ketoacid undergoes a metal-dependent reduction by NADPH to yield (R)-2,3-dihydroxy-isovalerate. This is Ketol-acid reductoisomerase (NADP(+)) from Cereibacter sphaeroides (strain ATCC 17025 / ATH 2.4.3) (Rhodobacter sphaeroides).